Reading from the N-terminus, the 345-residue chain is N-acetyl-gamma-glutamyl-phosphate reductase (345 aa).

Cysteine 149 is an active-site residue.

This sequence belongs to the NAGSA dehydrogenase family. Type 1 subfamily.

It localises to the cytoplasm. It catalyses the reaction N-acetyl-L-glutamate 5-semialdehyde + phosphate + NADP(+) = N-acetyl-L-glutamyl 5-phosphate + NADPH + H(+). It participates in amino-acid biosynthesis; L-arginine biosynthesis; N(2)-acetyl-L-ornithine from L-glutamate: step 3/4. Catalyzes the NADPH-dependent reduction of N-acetyl-5-glutamyl phosphate to yield N-acetyl-L-glutamate 5-semialdehyde. The polypeptide is N-acetyl-gamma-glutamyl-phosphate reductase (Bacillus cereus (strain ATCC 10987 / NRS 248)).